A 983-amino-acid chain; its full sequence is GPI ethanolamine phosphate transferase 2, catalytic subunit (983 aa).

At 1-431 the chain is on the lumenal side; that stretch reads MRLGSGTFAT…SLSAQVAQYD (431 aa). N-linked (GlcNAc...) asparagine glycosylation occurs at Asn194. 12 helical membrane passes run 432–452, 471–491, 506–526, 552–572, 699–719, 721–741, 752–772, 789–809, 812–832, 879–899, 919–939, and 955–975; these read IYSM…LLLS, GFSL…VIVC, LAAG…VSVL, LLIL…SFVE, VLAA…CSPV, KAAL…IGSV, ISKG…ILFT, LKTV…ALLF, HNLP…KFIW, VEIP…VLWA, ACFC…VLVT, and LLYE…FTAM.

The protein belongs to the PIGG/PIGN/PIGO family. PIGG subfamily. As to quaternary structure, part of the ethanolamine phosphate transferase 2 complex composed by PIGG and PIGF. PIGF is required to stabilize it. Competes with PIGO for the binding of PIGF.

The protein localises to the endoplasmic reticulum membrane. Its pathway is glycolipid biosynthesis; glycosylphosphatidylinositol-anchor biosynthesis. Catalytic subunit of the ethanolamine phosphate transferase 2 complex that transfers an ethanolamine phosphate (EtNP) from a phosphatidylethanolamine (PE) to the 6-OH position of the second alpha-1,6-linked mannose of a 6-PEtn-alpha-D-Man-(1-&gt;2)-alpha-D-Man-(1-&gt;6)-2-PEtn-alpha-D-Man-(1-&gt;4)-alpha-D-GlcN-(1-&gt;6)-(1-radyl,2-acyl-sn-glycero-3-phospho)-2-acyl-inositol (also termed H7) intermediate to generate a 6-PEtn-alpha-D-Man-(1-&gt;2)-6-PEtn-alpha-D-Man-(1-&gt;6)-2-PEtn-alpha-D-Man-(1-&gt;4)-alpha-D-GlcN-(1-&gt;6)-(1-radyl,2-acyl-sn-glycero-3-phospho)-2-acyl-inositol (also termed H8) and participates in the eleventh step of the glycosylphosphatidylinositol-anchor biosynthesis. This is GPI ethanolamine phosphate transferase 2, catalytic subunit from Homo sapiens (Human).